The following is a 71-amino-acid chain: Exodeoxyribonuclease 7 small subunit (71 aa).

It belongs to the XseB family. In terms of assembly, heterooligomer composed of large and small subunits.

Its subcellular location is the cytoplasm. The enzyme catalyses Exonucleolytic cleavage in either 5'- to 3'- or 3'- to 5'-direction to yield nucleoside 5'-phosphates.. Its function is as follows. Bidirectionally degrades single-stranded DNA into large acid-insoluble oligonucleotides, which are then degraded further into small acid-soluble oligonucleotides. The sequence is that of Exodeoxyribonuclease 7 small subunit from Endomicrobium trichonymphae.